The chain runs to 326 residues: Type II methyltransferase M.EcoRI (326 aa).

This sequence belongs to the N(4)/N(6)-methyltransferase family. As to quaternary structure, monomer.

It catalyses the reaction a 2'-deoxyadenosine in DNA + S-adenosyl-L-methionine = an N(6)-methyl-2'-deoxyadenosine in DNA + S-adenosyl-L-homocysteine + H(+). A methylase that recognizes the double-stranded sequence 5'-GAATTC-3', methylates A-3 on both strands, and protects the DNA from cleavage by the EcoRI endonuclease. In Escherichia coli, this protein is Type II methyltransferase M.EcoRI (ecoRIM).